Here is a 728-residue protein sequence, read N- to C-terminus: Double-strand break repair protein mre-11 (728 aa).

Residues M1–V12 are compositionally biased toward acidic residues. Positions M1 to D45 are disordered. Mn(2+)-binding residues include D73, H75, D113, and N181. H182 serves as the catalytic Proton donor. H269, H301, and H303 together coordinate Mn(2+). The interval K601–F728 is disordered. The segment covering V607 to P616 has biased composition (acidic residues). Over residues P622–S632 the composition is skewed to polar residues. Residues S634 to M645 are compositionally biased toward acidic residues.

This sequence belongs to the MRE11/RAD32 family. In terms of assembly, component of the MRN complex composed of two heterodimers rad-50 and mre-11 associated with a single nbs-1. Mn(2+) is required as a cofactor.

The protein localises to the nucleus. Its subcellular location is the chromosome. Its function is as follows. Core component of the MRN complex, which plays a central role in double-strand break (DSB) repair, DNA recombination, maintenance of telomere integrity and meiosis. The MRN complex is involved in the repair of DNA double-strand breaks (DSBs) via homologous recombination (HR), an error-free mechanism which primarily occurs during S and G2 phases. The complex (1) mediates the end resection of damaged DNA, which generates proper single-stranded DNA, a key initial steps in HR, and is (2) required for the recruitment of other repair factors and efficient activation of ATM and ATR upon DNA damage. Within the MRN complex, mre-11 possesses both single-strand endonuclease activity and double-strand-specific 3'-5' exonuclease activity. Mre-11 first endonucleolytically cleaves the 5' strand at DNA DSB ends to prevent non-homologous end joining (NHEJ) and licence HR. It then generates a single-stranded DNA gap via 3' to 5' exonucleolytic degradation, which is required for single-strand invasion and recombination. Required for meiotic crossing over and chiasma formation. Pachytene morphology and homolog pairing are normal. Vital in long term for maintenance of reproductive capacity of subsequent generations. This Caenorhabditis elegans protein is Double-strand break repair protein mre-11.